Here is a 363-residue protein sequence, read N- to C-terminus: Glutamate 5-kinase (363 aa).

Residue Lys6 coordinates ATP. Substrate contacts are provided by Ser46, Asp133, and Asn145. ATP-binding positions include Thr165 to Asp166 and Thr207 to Lys213. A PUA domain is found at His271–Thr349.

The protein belongs to the glutamate 5-kinase family.

The protein resides in the cytoplasm. The enzyme catalyses L-glutamate + ATP = L-glutamyl 5-phosphate + ADP. The protein operates within amino-acid biosynthesis; L-proline biosynthesis; L-glutamate 5-semialdehyde from L-glutamate: step 1/2. In terms of biological role, catalyzes the transfer of a phosphate group to glutamate to form L-glutamate 5-phosphate. In Deinococcus radiodurans (strain ATCC 13939 / DSM 20539 / JCM 16871 / CCUG 27074 / LMG 4051 / NBRC 15346 / NCIMB 9279 / VKM B-1422 / R1), this protein is Glutamate 5-kinase.